We begin with the raw amino-acid sequence, 506 residues long: Galactose/methyl galactoside import ATP-binding protein MglA (506 aa).

ABC transporter domains follow at residues 14–249 (LEMR…VGRS) and 259–506 (NKPG…SLHL). 46-53 (GENGAGKS) lines the ATP pocket.

It belongs to the ABC transporter superfamily. Galactose/methyl galactoside importer (TC 3.A.1.2.3) family. The complex is composed of one ATP-binding protein (MglA), two transmembrane proteins (MglC) and a solute-binding protein (MglB).

The protein resides in the cell inner membrane. It catalyses the reaction D-galactose(out) + ATP + H2O = D-galactose(in) + ADP + phosphate + H(+). The catalysed reaction is methyl beta-D-galactoside(out) + ATP + H2O = methyl beta-D-galactoside(in) + ADP + phosphate + H(+). With respect to regulation, stimulated 3-fold by galactose and inhibited by vanadate, N-ethylmaleimide, and 5-methoxyindole-2-carboxylic acid. Functionally, part of the ABC transporter complex MglABC involved in galactose/methyl galactoside import. Responsible for energy coupling to the transport system. This is Galactose/methyl galactoside import ATP-binding protein MglA from Salmonella typhimurium (strain LT2 / SGSC1412 / ATCC 700720).